Here is a 473-residue protein sequence, read N- to C-terminus: Isocitrate dehydrogenase [NADP] (473 aa).

Threonine 104 contacts NADP(+). The D-threo-isocitrate site is built by serine 113, asparagine 115, arginine 119, arginine 129, and arginine 153. Aspartate 362 is a binding site for Mg(2+). Residues 394-400 (HGTAPKH), asparagine 407, tyrosine 446, and arginine 450 each bind NADP(+).

This sequence belongs to the isocitrate and isopropylmalate dehydrogenases family. In terms of assembly, homodimer. Mg(2+) is required as a cofactor. The cofactor is Mn(2+).

It carries out the reaction D-threo-isocitrate + NADP(+) = 2-oxoglutarate + CO2 + NADPH. With respect to regulation, inhibited by either oxaloacetate or glyoxylate. Also inhibited by the adenine nucleotides AMP, ADP and ATP and by NADPH, which inhibits the activity by 28% when it is added to the assay mixture at 0.25 mM. In terms of biological role, catalyzes the oxidative decarboxylation of isocitrate to 2-oxoglutarate and carbon dioxide with the concomitant reduction of NADP(+). The protein is Isocitrate dehydrogenase [NADP] of Nostoc sp. (strain PCC 7120 / SAG 25.82 / UTEX 2576).